Consider the following 204-residue polypeptide: bMERB domain-containing protein 1 (204 aa).

Positions 3–150 (LKQSLSTHLE…EQEEDKEMAD (148 aa)) constitute a bMERB domain. A disordered region spans residues 162-187 (VTKSPASSRAEKKAEPPPSKPTVAKT).

The sequence is that of bMERB domain-containing protein 1 from Homo sapiens (Human).